A 242-amino-acid chain; its full sequence is DnaJ homolog subfamily B member 6 (242 aa).

One can recognise a J domain in the interval Val2–Gly69. An interaction with HSP70 region spans residues Val2–Gly146. Residues Phe119–Lys242 are interaction with KRT18. An Omega-N-methylarginine modification is found at Arg135.

As to quaternary structure, homooligomer. Interacts with BAG3, HSPB8 and STUB1. Interacts with ALKBH1. Interacts with HSP70, KRT18 and PTTG. As to expression, expressed in all tissues examined with highest expression in brain and retina and lower levels observed in testis, spleen, heart, liver and kidney.

The protein localises to the cytoplasm. The protein resides in the perinuclear region. It localises to the nucleus. Its subcellular location is the myofibril. It is found in the sarcomere. The protein localises to the z line. Functionally, has a stimulatory effect on the ATPase activity of HSP70 in a dose-dependent and time-dependent manner and hence acts as a co-chaperone of HSP70. Plays an indispensable role in the organization of KRT8/KRT18 filaments. Acts as an endogenous molecular chaperone for neuronal proteins including huntingtin. Suppresses aggregation and toxicity of polyglutamine-containing, aggregation-prone proteins. Also reduces cellular toxicity and caspase-3 activity. This is DnaJ homolog subfamily B member 6 (DNAJB6) from Bos taurus (Bovine).